Consider the following 300-residue polypeptide: Cation-efflux pump FieF (300 aa).

4 consecutive transmembrane segments (helical) span residues alanine 12–tryptophan 32, leucine 40–valine 60, alanine 82–phenylalanine 102, and proline 114–phenylalanine 134. Zn(2+) is bound by residues aspartate 45 and aspartate 49. Zn(2+) is bound by residues histidine 153 and aspartate 157. Transmembrane regions (helical) follow at residues glutamine 155–phenylalanine 175 and alanine 178–glycine 198.

The protein belongs to the cation diffusion facilitator (CDF) transporter (TC 2.A.4) family. FieF subfamily. As to quaternary structure, homodimer.

The protein resides in the cell inner membrane. It carries out the reaction Zn(2+)(in) + H(+)(out) = Zn(2+)(out) + H(+)(in). It catalyses the reaction Cd(2+)(in) + H(+)(out) = Cd(2+)(out) + H(+)(in). The catalysed reaction is Fe(2+)(in) + H(+)(out) = Fe(2+)(out) + H(+)(in). Divalent metal cation transporter which exports Zn(2+), Cd(2+) and possibly Fe(2+). May be involved in zinc and iron detoxification by efflux. The polypeptide is Cation-efflux pump FieF (Yersinia pestis bv. Antiqua (strain Antiqua)).